The chain runs to 103 residues: Pyrimidine/purine nucleoside phosphorylase (103 aa).

It belongs to the nucleoside phosphorylase PpnP family.

The enzyme catalyses a purine D-ribonucleoside + phosphate = a purine nucleobase + alpha-D-ribose 1-phosphate. It catalyses the reaction adenosine + phosphate = alpha-D-ribose 1-phosphate + adenine. The catalysed reaction is cytidine + phosphate = cytosine + alpha-D-ribose 1-phosphate. It carries out the reaction guanosine + phosphate = alpha-D-ribose 1-phosphate + guanine. The enzyme catalyses inosine + phosphate = alpha-D-ribose 1-phosphate + hypoxanthine. It catalyses the reaction thymidine + phosphate = 2-deoxy-alpha-D-ribose 1-phosphate + thymine. The catalysed reaction is uridine + phosphate = alpha-D-ribose 1-phosphate + uracil. It carries out the reaction xanthosine + phosphate = alpha-D-ribose 1-phosphate + xanthine. In terms of biological role, catalyzes the phosphorolysis of diverse nucleosides, yielding D-ribose 1-phosphate and the respective free bases. Can use uridine, adenosine, guanosine, cytidine, thymidine, inosine and xanthosine as substrates. Also catalyzes the reverse reactions. The protein is Pyrimidine/purine nucleoside phosphorylase of Sulfurimonas denitrificans (strain ATCC 33889 / DSM 1251) (Thiomicrospira denitrificans (strain ATCC 33889 / DSM 1251)).